The chain runs to 437 residues: Epsilon-sarcoglycan (437 aa).

Residues 1 to 317 are Extracellular-facing; sequence MLLFWWWELG…LKSRDYYTDF (317 aa). Asn-200 is a glycosylation site (N-linked (GlcNAc...) asparagine). The helical transmembrane segment at 318-338 threads the bilayer; it reads LVTLAVPSAVALVLFLILAYI. The Cytoplasmic segment spans residues 339–437; sequence MCCRREGVEK…QQQTTGKWYP (99 aa).

Belongs to the sarcoglycan alpha/epsilon family. Post-translationally, N-glycosylated. In terms of processing, ubiquitinated, leading to its degradation by the proteasome. As to expression, in both neural tissues including cerebellar cortex, striatum, cerebral cortex, thalamus and hippocampus, and non-neural tissues including quadriceps muscle, liver, kidney, spleen, lung, testis and heart. Widely distributed in the brain, with a robust signal obtained from regions with dense neuronal packing such as the pyramidal cell layer of the hippocampus, cerebellar molecular layer, and cerebral cortex. Levels are highest in kidney, moderate in brain and lung, and low in skeletal muscle, liver, spleen and testis.

It localises to the cell membrane. Its subcellular location is the sarcolemma. The protein resides in the cytoplasm. It is found in the cytoskeleton. The protein localises to the cell projection. It localises to the dendrite. Its subcellular location is the golgi apparatus. Functionally, component of the sarcoglycan complex, a subcomplex of the dystrophin-glycoprotein complex which forms a link between the F-actin cytoskeleton and the extracellular matrix. The chain is Epsilon-sarcoglycan from Rattus norvegicus (Rat).